Consider the following 163-residue polypeptide: Small ribosomal subunit protein uS3m (163 aa).

The N-terminal 31 residues, 1–31, are a transit peptide targeting the mitochondrion; it reads MAASLIRQTKLLSVFSSAGCFRSIHSTAACL.

Belongs to the universal ribosomal protein uS3 family. In terms of assembly, component of the mitochondrial ribosome small subunit (28S) which comprises a 12S rRNA and about 30 distinct proteins.

The protein localises to the mitochondrion. The protein is Small ribosomal subunit protein uS3m (mrps24) of Danio rerio (Zebrafish).